The chain runs to 68 residues: Large ribosomal subunit protein bL35 (68 aa).

Belongs to the bacterial ribosomal protein bL35 family.

In Rickettsia bellii (strain RML369-C), this protein is Large ribosomal subunit protein bL35.